The following is a 65-amino-acid chain: Large ribosomal subunit protein bL35 (65 aa).

This sequence belongs to the bacterial ribosomal protein bL35 family.

This is Large ribosomal subunit protein bL35 from Paraburkholderia xenovorans (strain LB400).